Reading from the N-terminus, the 89-residue chain is Large ribosomal subunit protein bL27 (89 aa).

Residues 1 to 21 form a disordered region; the sequence is MAHKKAGGSSRNGRDSQSKRL.

It belongs to the bacterial ribosomal protein bL27 family.

This is Large ribosomal subunit protein bL27 from Rhizobium leguminosarum bv. trifolii (strain WSM2304).